Here is a 266-residue protein sequence, read N- to C-terminus: uncharacterized protein (266 aa).

A signal peptide spans 1–22; it reads MGYLKRLVLYIVIMVMSVFIIG. A lipid anchor (N-palmitoyl cysteine) is attached at C23. A lipid anchor (S-diacylglycerol cysteine) is attached at C23.

This sequence belongs to the staphylococcal tandem lipoprotein family.

It localises to the cell membrane. This is an uncharacterized protein from Staphylococcus aureus (strain USA300).